Reading from the N-terminus, the 207-residue chain is Ribosomal RNA small subunit methyltransferase G (207 aa).

S-adenosyl-L-methionine-binding positions include G73, L78, 124 to 125, and R139; that span reads VE.

It belongs to the methyltransferase superfamily. RNA methyltransferase RsmG family.

The protein resides in the cytoplasm. It carries out the reaction guanosine(527) in 16S rRNA + S-adenosyl-L-methionine = N(7)-methylguanosine(527) in 16S rRNA + S-adenosyl-L-homocysteine. Functionally, specifically methylates the N7 position of guanine in position 527 of 16S rRNA. The polypeptide is Ribosomal RNA small subunit methyltransferase G (Shigella dysenteriae serotype 1 (strain Sd197)).